Here is a 177-residue protein sequence, read N- to C-terminus: 2''-aminoglycoside nucleotidyltransferase (177 aa).

Residues aspartate 44, aspartate 46, and aspartate 86 each contribute to the Mg(2+) site. Aspartate 86 functions as the Proton acceptor in the catalytic mechanism.

Mg(2+) is required as a cofactor.

The catalysed reaction is nucleoside triphosphate + gentamicin = diphosphate + 2''-nucleotidylgentamicin.. Functionally, mediates bacterial resistance to kanamycin, gentamicin, dibekacin, sisomicin, neomycin and tobramycin by adenylating the 2''-hydroxyl group of these antibiotics. This is 2''-aminoglycoside nucleotidyltransferase (aadB) from Klebsiella pneumoniae.